Reading from the N-terminus, the 1979-residue chain is Repetitive organellar protein (1979 aa).

Over residues Met1 to Lys12 the composition is skewed to basic residues. 2 disordered regions span residues Met1–Tyr42 and Thr54–Ser116. 2 stretches are compositionally biased toward basic and acidic residues: residues Glu13–Phe24 and Asn31–Tyr42. Positions Glu68–Asn114 are enriched in low complexity. Coiled-coil stretches lie at residues Asp127 to Glu366, Leu412 to Leu666, Leu693 to Gln876, Lys992 to Ile1094, Val1126 to Lys1307, and Ile1398 to Gln1467.

The protein localises to the host cell membrane. In Plasmodium falciparum (isolate 3D7), this protein is Repetitive organellar protein.